Reading from the N-terminus, the 298-residue chain is Probable mitochondrial 2-oxodicarboxylate carrier (298 aa).

The next 6 helical transmembrane spans lie at 6–26, 62–81, 105–125, 159–179, 203–223, and 267–287; these read IPFP…VLTL, HRLY…KRAL, ALSI…VVPF, ALYN…AGYF, LIAG…FDVI, and VLRL…VIEF. Solcar repeat units follow at residues 6–92, 102–188, and 197–287; these read IPFP…YSKL, SSPA…IRNS, and GEIR…VIEF.

This sequence belongs to the mitochondrial carrier (TC 2.A.29) family.

The protein resides in the mitochondrion inner membrane. Transports C5-C7 oxodicarboxylates across the inner membranes of mitochondria. In Schizosaccharomyces pombe (strain 972 / ATCC 24843) (Fission yeast), this protein is Probable mitochondrial 2-oxodicarboxylate carrier.